The following is a 337-amino-acid chain: Pyridoxal 5'-phosphate synthase subunit PdxS (337 aa).

D63 contributes to the D-ribose 5-phosphate binding site. Catalysis depends on K120, which acts as the Schiff-base intermediate with D-ribose 5-phosphate. G192 lines the D-ribose 5-phosphate pocket. K204 contacts D-glyceraldehyde 3-phosphate. Residues G253 and 274-275 (GS) each bind D-ribose 5-phosphate.

Belongs to the PdxS/SNZ family. In terms of assembly, in the presence of PdxT, forms a dodecamer of heterodimers.

It catalyses the reaction aldehydo-D-ribose 5-phosphate + D-glyceraldehyde 3-phosphate + L-glutamine = pyridoxal 5'-phosphate + L-glutamate + phosphate + 3 H2O + H(+). Its pathway is cofactor biosynthesis; pyridoxal 5'-phosphate biosynthesis. Its function is as follows. Catalyzes the formation of pyridoxal 5'-phosphate from ribose 5-phosphate (RBP), glyceraldehyde 3-phosphate (G3P) and ammonia. The ammonia is provided by the PdxT subunit. Can also use ribulose 5-phosphate and dihydroxyacetone phosphate as substrates, resulting from enzyme-catalyzed isomerization of RBP and G3P, respectively. The polypeptide is Pyridoxal 5'-phosphate synthase subunit PdxS (Aeropyrum pernix (strain ATCC 700893 / DSM 11879 / JCM 9820 / NBRC 100138 / K1)).